The sequence spans 483 residues: V-type proton ATPase subunit H (483 aa).

A Phosphoserine modification is found at S483.

Belongs to the V-ATPase H subunit family. As to quaternary structure, V-ATPase is a heteromultimeric enzyme made up of two complexes: the ATP-hydrolytic V1 complex and the proton translocation V0 complex. The V1 complex consists of three catalytic AB heterodimers that form a heterohexamer, three peripheral stalks each consisting of EG heterodimers, one central rotor including subunits D and F, and the regulatory subunits C and H. The proton translocation complex V0 consists of the proton transport subunit a, a ring of proteolipid subunits c9c'', rotary subunit d, subunits e and f, and the accessory subunits ATP6AP1/Ac45 and ATP6AP2/PRR. Interacts with AP2M1. Interacts with TM9SF4 in colon cancer cells. In terms of assembly, (Microbial infection) Interacts with HIV-1 Nef protein. (Microbial infection) Interacts with M.tuberculosis PtpA, which blocks V-ATPase trafficking and phagosome acidification. Widely expressed.

It is found in the cytoplasmic vesicle. The protein resides in the clathrin-coated vesicle membrane. Its function is as follows. Subunit of the V1 complex of vacuolar(H+)-ATPase (V-ATPase), a multisubunit enzyme composed of a peripheral complex (V1) that hydrolyzes ATP and a membrane integral complex (V0) that translocates protons. V-ATPase is responsible for acidifying and maintaining the pH of intracellular compartments and in some cell types, is targeted to the plasma membrane, where it is responsible for acidifying the extracellular environment. Subunit H is essential for V-ATPase activity, but not for the assembly of the complex. Involved in the endocytosis mediated by clathrin-coated pits, required for the formation of endosomes. The protein is V-type proton ATPase subunit H (ATP6V1H) of Homo sapiens (Human).